The sequence spans 201 residues: 3-isopropylmalate dehydratase small subunit (201 aa).

Belongs to the LeuD family. LeuD type 1 subfamily. As to quaternary structure, heterodimer of LeuC and LeuD.

It catalyses the reaction (2R,3S)-3-isopropylmalate = (2S)-2-isopropylmalate. The protein operates within amino-acid biosynthesis; L-leucine biosynthesis; L-leucine from 3-methyl-2-oxobutanoate: step 2/4. In terms of biological role, catalyzes the isomerization between 2-isopropylmalate and 3-isopropylmalate, via the formation of 2-isopropylmaleate. This is 3-isopropylmalate dehydratase small subunit from Salmonella paratyphi A (strain ATCC 9150 / SARB42).